Reading from the N-terminus, the 145-residue chain is Transcription antitermination protein NusB (145 aa).

Belongs to the NusB family.

Involved in transcription antitermination. Required for transcription of ribosomal RNA (rRNA) genes. Binds specifically to the boxA antiterminator sequence of the ribosomal RNA (rrn) operons. The polypeptide is Transcription antitermination protein NusB (Acidothermus cellulolyticus (strain ATCC 43068 / DSM 8971 / 11B)).